The following is a 1313-amino-acid chain: Inter-alpha-trypsin inhibitor heavy chain H6 (1313 aa).

The N-terminal stretch at 1 to 23 (MSGWRYLICVSFLLTILLELTYQ) is a signal peptide. In terms of domain architecture, VIT spans 24 to 150 (GPPVPASSST…EVTFSLAYEE (127 aa)). Asparagine 83, asparagine 374, asparagine 540, and asparagine 594 each carry an N-linked (GlcNAc...) asparagine glycan. Residues 283–469 (NVVFVIDVSS…LQLKGLYEEI (187 aa)) enclose the VWFA domain. Disordered regions lie at residues 612-644 (QPKQASEETRRQTSTSAGPDTIMPSSSSRHGLG), 783-817 (HSKPGAPSHPQLGALTSQAPKGLPQSRPGVSTLQV), 856-928 (LKPS…EPLP), and 959-983 (PSRPGVPTMSLLNSSRPTPEGSPPN). Residues 623–640 (QTSTSAGPDTIMPSSSSR) are compositionally biased toward polar residues. Over residues 864-875 (QISTSISLSKPE) the composition is skewed to polar residues. Residues 876–888 (TPNPHMPQTPLPP) show a composition bias toward pro residues. Over residues 907–921 (TISSSTGPSSTTTTS) the composition is skewed to low complexity. N-linked (GlcNAc...) asparagine glycans are attached at residues asparagine 971 and asparagine 1231.

The protein belongs to the ITIH family.

Its subcellular location is the secreted. The protein is Inter-alpha-trypsin inhibitor heavy chain H6 (ITIH6) of Homo sapiens (Human).